The following is a 398-amino-acid chain: Potassium channel subfamily K member 4 (398 aa).

The Cytoplasmic portion of the chain corresponds to 1 to 3 (MRS). Residues 4-24 (TTLLALLALVLLYLVSGALVF) form a helical membrane-spanning segment. Residues 25 to 88 (QALEQPHEQQ…WTNSSNHSSA (64 aa)) lie on the Extracellular side of the membrane. Residues Asn-81 and Asn-84 are each glycosylated (N-linked (GlcNAc...) asparagine). Residues 89-103 (WNLGSAFFFSGTIIT) constitute an intramembrane region (helical). K(+)-binding residues include Thr-104, Ile-105, Gly-106, and Tyr-107. The interval 104 to 109 (TIGYGN) is selectivity filter 1. The stretch at 104–110 (TIGYGNI) is an intramembrane region. The Extracellular segment spans residues 111 to 118 (VLHTDAGR). Residues 119-151 (LFCIFYALVGIPLFGMLLAGVGDRLGSSLRRGI) traverse the membrane as a helical segment. At 152–173 (GHIEAIFLKWHVPPGLVRSLSA) the chain is on the cytoplasmic side. The chain crosses the membrane as a helical span at residues 174 to 195 (VLFLLIGCLLFVLTPTFVFSYM). Residues 196 to 200 (ESWSK) lie on the Extracellular side of the membrane. Positions 201–214 (LEAIYFVIVTLTTV) form an intramembrane region, helical. Residues Thr-213, Val-214, Gly-215, and Phe-216 each contribute to the K(+) site. A selectivity filter 2 region spans residues 213-218 (TVGFGD). The stretch at 215 to 220 (GFGDYV) is an intramembrane region. At 221 to 234 (PGDGTGQNSPAYQP) the chain is on the extracellular side. Residues 235–261 (LVWFWILFGLAYFASVLTTIGNWLRAV) form a helical membrane-spanning segment. Over 262-398 (SRRTRAEMGG…GRLRDKAVPV (137 aa)) the chain is Cytoplasmic. Positions 282–292 (TVTARVTQRTG) are enriched in polar residues. The tract at residues 282–398 (TVTARVTQRT…GRLRDKAVPV (117 aa)) is disordered. The segment covering 370–389 (PRGRRRPNPSKKPSRPRGPG) has biased composition (basic residues).

Belongs to the two pore domain potassium channel (TC 1.A.1.8) family. In terms of assembly, homodimer; disulfide-linked. Forms heterodimers with other 2-pore domain K(+) channel subunits, such as KCNK2 and KCNK10. N-glycosylated. Expressed in brain, spinal cord and eye. Not detected in heart, skeletal muscle, liver, lungs, kidney and testis.

It localises to the cell membrane. The protein resides in the cell projection. The protein localises to the axon. It catalyses the reaction K(+)(in) = K(+)(out). It carries out the reaction Rb(+)(in) = Rb(+)(out). The enzyme catalyses Cs(+)(in) = Cs(+)(out). With respect to regulation, activated by arachidonic acid and other polyunsaturated fatty acids. Not affected by volatile general anesthetics such as chloroform, diethyl ether, halothane and isoflurane. Activated at intracellular and extracellular basic pHs. In terms of biological role, k(+) channel that conducts voltage-dependent outward rectifying currents upon membrane depolarization. Voltage sensing is coupled to K(+) electrochemical gradient in an 'ion flux gating' mode where outward but not inward ion flow opens the gate. Converts to voltage-independent 'leak' conductance mode upon stimulation by various stimuli including mechanical membrane stretch, basic pH, temperature and lipids. Homo- and heterodimerizes to form functional channels with distinct regulatory and gating properties. At trigeminal A-beta afferent nerves, the heterodimer of KCNK2/TREK-1 and KCNK4/TRAAK is mostly coexpressed at nodes of Ranvier where it conducts voltage-independent mechanosensitive and thermosensitive currents, allowing rapid action potential repolarization, high speed and high frequence saltatory conduction on myelinated nerves to ensure prompt sensory responses. Permeable to other monovalent cations such as Rb(+) and Cs(+). The protein is Potassium channel subfamily K member 4 of Mus musculus (Mouse).